We begin with the raw amino-acid sequence, 354 residues long: Holliday junction branch migration complex subunit RuvB (354 aa).

The segment at 1–22 (MTLQTDDFAPAPARRVVSAAPA) is disordered. Positions 5–194 (TDDFAPAPAR…FGIVARLEFY (190 aa)) are large ATPase domain (RuvB-L). The span at 9–22 (APAPARRVVSAAPA) shows a compositional bias: low complexity. Residues Leu-33, Arg-34, Gly-75, Lys-78, Thr-79, Thr-80, 141 to 143 (EDY), Arg-184, Tyr-194, and Arg-231 contribute to the ATP site. Residue Thr-79 participates in Mg(2+) binding. A small ATPAse domain (RuvB-S) region spans residues 195-265 (SAQELARIVK…IAERALAMLD (71 aa)). A head domain (RuvB-H) region spans residues 268-354 (PEGLDVMDRK…GAQAPGLFAV (87 aa)). Positions 323 and 328 each coordinate DNA.

Belongs to the RuvB family. As to quaternary structure, homohexamer. Forms an RuvA(8)-RuvB(12)-Holliday junction (HJ) complex. HJ DNA is sandwiched between 2 RuvA tetramers; dsDNA enters through RuvA and exits via RuvB. An RuvB hexamer assembles on each DNA strand where it exits the tetramer. Each RuvB hexamer is contacted by two RuvA subunits (via domain III) on 2 adjacent RuvB subunits; this complex drives branch migration. In the full resolvosome a probable DNA-RuvA(4)-RuvB(12)-RuvC(2) complex forms which resolves the HJ.

The protein resides in the cytoplasm. It catalyses the reaction ATP + H2O = ADP + phosphate + H(+). The RuvA-RuvB-RuvC complex processes Holliday junction (HJ) DNA during genetic recombination and DNA repair, while the RuvA-RuvB complex plays an important role in the rescue of blocked DNA replication forks via replication fork reversal (RFR). RuvA specifically binds to HJ cruciform DNA, conferring on it an open structure. The RuvB hexamer acts as an ATP-dependent pump, pulling dsDNA into and through the RuvAB complex. RuvB forms 2 homohexamers on either side of HJ DNA bound by 1 or 2 RuvA tetramers; 4 subunits per hexamer contact DNA at a time. Coordinated motions by a converter formed by DNA-disengaged RuvB subunits stimulates ATP hydrolysis and nucleotide exchange. Immobilization of the converter enables RuvB to convert the ATP-contained energy into a lever motion, pulling 2 nucleotides of DNA out of the RuvA tetramer per ATP hydrolyzed, thus driving DNA branch migration. The RuvB motors rotate together with the DNA substrate, which together with the progressing nucleotide cycle form the mechanistic basis for DNA recombination by continuous HJ branch migration. Branch migration allows RuvC to scan DNA until it finds its consensus sequence, where it cleaves and resolves cruciform DNA. The sequence is that of Holliday junction branch migration complex subunit RuvB from Verminephrobacter eiseniae (strain EF01-2).